The following is a 115-amino-acid chain: 5-hydroxyisourate hydrolase (115 aa).

Positions 1–23 are disordered; sequence MSGLTTHILDQASGKPAAGVGVR. Substrate is bound by residues His7, Arg45, and Tyr112.

The protein belongs to the transthyretin family. 5-hydroxyisourate hydrolase subfamily. Homotetramer.

It catalyses the reaction 5-hydroxyisourate + H2O = 5-hydroxy-2-oxo-4-ureido-2,5-dihydro-1H-imidazole-5-carboxylate + H(+). Functionally, catalyzes the hydrolysis of 5-hydroxyisourate (HIU) to 2-oxo-4-hydroxy-4-carboxy-5-ureidoimidazoline (OHCU). The chain is 5-hydroxyisourate hydrolase from Caulobacter vibrioides (strain ATCC 19089 / CIP 103742 / CB 15) (Caulobacter crescentus).